Here is a 222-residue protein sequence, read N- to C-terminus: Oligoribonuclease (222 aa).

Positions 19–38 (PMASSSSTGKQEESVNGSLE) are disordered. The span at 21–35 (ASSSSTGKQEESVNG) shows a compositional bias: polar residues. The 165-residue stretch at 46–210 (LVWIDLEMTG…DDIRESIKEL (165 aa)) folds into the Exonuclease domain. His-167 is a catalytic residue.

Belongs to the oligoribonuclease family.

3'-to-5' exoribonuclease specific for small oligoribonucleotides. The chain is Oligoribonuclease from Arabidopsis thaliana (Mouse-ear cress).